A 190-amino-acid chain; its full sequence is Imidazoleglycerol-phosphate dehydratase (190 aa).

This sequence belongs to the imidazoleglycerol-phosphate dehydratase family.

It localises to the cytoplasm. It catalyses the reaction D-erythro-1-(imidazol-4-yl)glycerol 3-phosphate = 3-(imidazol-4-yl)-2-oxopropyl phosphate + H2O. The protein operates within amino-acid biosynthesis; L-histidine biosynthesis; L-histidine from 5-phospho-alpha-D-ribose 1-diphosphate: step 6/9. The protein is Imidazoleglycerol-phosphate dehydratase of Methanococcus vannielii (strain ATCC 35089 / DSM 1224 / JCM 13029 / OCM 148 / SB).